The following is a 326-amino-acid chain: Vitamin B12 import system permease protein BtuC (326 aa).

A run of 9 helical transmembrane segments spans residues 13–35 (IRWL…CAGE), 55–77 (IRLP…GAVM), 90–107 (LLGV…AVLL), 111–133 (QLPN…LILL), 146–168 (LLAG…YFST), 188–205 (WRQS…LWIC), 242–264 (MVGV…PHIL), 274–296 (VLLP…VARL), and 303–322 (LPIG…WLLL).

Belongs to the binding-protein-dependent transport system permease family. FecCD subfamily. The complex is composed of two ATP-binding proteins (BtuD), two transmembrane proteins (BtuC) and a solute-binding protein (BtuF).

The protein resides in the cell inner membrane. Functionally, part of the ABC transporter complex BtuCDF involved in vitamin B12 import. Involved in the translocation of the substrate across the membrane. The polypeptide is Vitamin B12 import system permease protein BtuC (Shigella flexneri).